We begin with the raw amino-acid sequence, 519 residues long: Probable WRKY transcription factor 33 (519 aa).

Disordered stretches follow at residues 1–34 and 123–212; these read MAASFLTMDNSRTRQNMNGSANWSQQSGRTSTSS and SSGV…CTFP. Over residues 7–34 the composition is skewed to polar residues; sequence TMDNSRTRQNMNGSANWSQQSGRTSTSS. Low complexity predominate over residues 130–142; sequence TTTTTTTTTTTTT. Positions 164 to 174 are enriched in polar residues; sequence TETRPNNQAVS. Residues 178-188 show a composition bias toward basic and acidic residues; it reads REQRKGEDGYN. The WRKY 1 DNA-binding region spans 178–242; the sequence is REQRKGEDGY…YKGSHNHPKP (65 aa). Zn(2+) contacts are provided by Cys-209, Cys-214, His-237, and His-239. Disordered stretches follow at residues 232–255 and 267–349; these read VYKGSHNHPKPQSTRRSSSSSSTF and NRQA…REPR. The span at 245–254 shows a compositional bias: low complexity; sequence TRRSSSSSST. Residues 269 to 299 are compositionally biased toward polar residues; sequence QASSDQPNSNNSFHQSDSFGMQQEDNTTSDS. Over residues 323 to 332 the composition is skewed to basic and acidic residues; that stretch reads PEAKRWKGDN. Residues 356–421 constitute a DNA-binding region (WRKY 2); sequence SDIDILDDGY…YEGKHNHDVP (66 aa). 4 residues coordinate Zn(2+): Cys-387, Cys-392, His-416, and His-418.

This sequence belongs to the WRKY group I family. In terms of assembly, interacts with MKS1. Interacts with ATG18A. Interacts with SIB1 and SIB2. Interacts with VQ1 and VQ10. Phosphorylated by MPK4. Phosphorylated on serine residues by MPK3 and MPK6 following infection with the necrotrophic fungal pathogen B.cinerea. Highly expressed in roots, leaves and flowers, and at lower levels in stems, siliques and seeds.

The protein resides in the nucleus. Functionally, transcription factor. Interacts specifically with the W box (5'-TTGAC[CT]-3'), a frequently occurring elicitor-responsive cis-acting element. Involved in defense responses. Required for resistance to the necrotrophic fungal pathogen B.cinerea. Regulates the antagonistic relationship between defense pathways mediating responses to the bacterial pathogen P. syringae and the necrotrophic pathogen B.cinerea. Required for the phytoalexin camalexin synthesis following infection with B.cinerea. Acts as a positive regulator of the camalexin biosynthetic genes PAD3 (CYP71B15) and CYP71A13 by binding to their promoters. Acts downstream of MPK3 and MPK6 in reprogramming the expression of camalexin biosynthetic genes, which drives the metabolic flow to camalexin production. Functions with WRKY25 as positive regulator of salt stress response and abscisic acid (ABA) signaling. Functions with WRKY25 and WRKY26 as positive regulator of plant thermotolerance by partially participating in ethylene-response signal transduction pathway. The DNA-binding activity of WRKY33 is increased by SIB1 and SIB2. The polypeptide is Probable WRKY transcription factor 33 (WRKY33) (Arabidopsis thaliana (Mouse-ear cress)).